The sequence spans 231 residues: Axial regulator YABBY 4 (231 aa).

The C4-type zinc finger occupies 26 to 53 (CGFCTTILLVSVPFTSLSMVVTVRCGHC). Disordered stretches follow at residues 98 to 120 (KVNQ…EDED) and 211 to 231 (NNGF…SPFE).

This sequence belongs to the YABBY family. Interacts with SPL/NZZ.

The protein resides in the nucleus. Functionally, essential for the formation and the abaxial-adaxial asymmetric growth of the ovule outer integument. The chain is Axial regulator YABBY 4 (YAB4) from Arabidopsis thaliana (Mouse-ear cress).